A 139-amino-acid chain; its full sequence is Small ribosomal subunit protein uS12 (139 aa).

Disordered stretches follow at residues 1-22 (MPTI…SKSP) and 37-57 (KTPS…TPKK). Positions 9-19 (RKGRKSHKGKS) are enriched in basic residues. D102 carries the post-translational modification 3-methylthioaspartic acid.

This sequence belongs to the universal ribosomal protein uS12 family. As to quaternary structure, part of the 30S ribosomal subunit. Contacts proteins S8 and S17. May interact with IF1 in the 30S initiation complex.

With S4 and S5 plays an important role in translational accuracy. Functionally, interacts with and stabilizes bases of the 16S rRNA that are involved in tRNA selection in the A site and with the mRNA backbone. Located at the interface of the 30S and 50S subunits, it traverses the body of the 30S subunit contacting proteins on the other side and probably holding the rRNA structure together. The combined cluster of proteins S8, S12 and S17 appears to hold together the shoulder and platform of the 30S subunit. The polypeptide is Small ribosomal subunit protein uS12 (Limosilactobacillus reuteri (strain DSM 20016) (Lactobacillus reuteri)).